A 307-amino-acid polypeptide reads, in one-letter code: Alpha N-terminal protein methyltransferase 1 (307 aa).

Residues 38 to 51 are compositionally biased toward low complexity; the sequence is EPAPAPAAGSNGVA. A disordered region spans residues 38–60; sequence EPAPAPAAGSNGVAGEEEAGGGG. S-adenosyl-L-methionine contacts are provided by residues Gly-123, Arg-128, 145 to 147, 179 to 180, and Gln-195; these read EPV and LQ.

The protein belongs to the methyltransferase superfamily. NTM1 family.

It carries out the reaction N-terminal L-alanyl-L-prolyl-L-lysyl-[protein] + 3 S-adenosyl-L-methionine = N-terminal N,N,N-trimethyl-L-alanyl-L-prolyl-L-lysyl-[protein] + 3 S-adenosyl-L-homocysteine + 3 H(+). The catalysed reaction is N-terminal L-seryl-L-prolyl-L-lysyl-[protein] + 3 S-adenosyl-L-methionine = N-terminal N,N,N-trimethyl-L-seryl-L-prolyl-L-lysyl-[protein] + 3 S-adenosyl-L-homocysteine + 3 H(+). It catalyses the reaction N-terminal L-prolyl-L-prolyl-L-lysyl-[protein] + 2 S-adenosyl-L-methionine = N-terminal N,N-dimethyl-L-prolyl-L-prolyl-L-lysyl-[protein] + 2 S-adenosyl-L-homocysteine + 2 H(+). Functionally, alpha-N-methyltransferase that methylates the N-terminus of target proteins containing the N-terminal motif [Ala/Pro/Ser]-Pro-Lys when the initiator Met is cleaved. Specifically catalyzes mono-, di- or tri-methylation of exposed alpha-amino group of Ala or Ser residue in the [Ala/Ser]-Pro-Lys motif and mono- or di-methylation of Pro in the Pro-Pro-Lys motif. The sequence is that of Alpha N-terminal protein methyltransferase 1 from Oryza sativa subsp. japonica (Rice).